We begin with the raw amino-acid sequence, 728 residues long: Catalase-peroxidase 1 (728 aa).

The tryptophyl-tyrosyl-methioninium (Trp-Tyr) (with M-244) cross-link spans 91–218 (WHSAGTYRTA…LAAVQMGLIY (128 aa)). Residue His-92 is the Proton acceptor of the active site. The tryptophyl-tyrosyl-methioninium (Tyr-Met) (with W-91) cross-link spans 218 to 244 (YVNPEGPDGNPDPVAAARDIRDTFARM). A heme b-binding site is contributed by His-259.

The protein belongs to the peroxidase family. Peroxidase/catalase subfamily. In terms of assembly, homodimer or homotetramer. The cofactor is heme b. In terms of processing, formation of the three residue Trp-Tyr-Met cross-link is important for the catalase, but not the peroxidase activity of the enzyme.

The catalysed reaction is H2O2 + AH2 = A + 2 H2O. The enzyme catalyses 2 H2O2 = O2 + 2 H2O. Its function is as follows. Bifunctional enzyme with both catalase and broad-spectrum peroxidase activity. The protein is Catalase-peroxidase 1 of Burkholderia ambifaria (strain MC40-6).